We begin with the raw amino-acid sequence, 245 residues long: MKKNSSDFCFSNERKAQLSEFLENLSIDFNNFDLLNTALSHSSYSNELDQKSDNNERLEFLGDSVLNLIITDHLYKTYPNKSEGELSKARSYIVSEDSLSSIAREIDLGSYILLGRGEESNDGRNKKGILADAIEAFVGAIYLDSGFLIATEFVVGLFDMYIRLMFNRGDFKDYKSLLQEYVQKKYKISPNYKLDKEIGPDHDKVFCVELYVGEKFISNGKGKSKKEAEMRAAEVALKAMEDINL.

One can recognise an RNase III domain in the interval Leu18–Gly146. Residue Glu59 coordinates Mg(2+). Asp63 is an active-site residue. 2 residues coordinate Mg(2+): Asp132 and Glu135. The active site involves Glu135. The region spanning Asp173 to Asp242 is the DRBM domain.

The protein belongs to the ribonuclease III family. As to quaternary structure, homodimer. It depends on Mg(2+) as a cofactor.

Its subcellular location is the cytoplasm. It catalyses the reaction Endonucleolytic cleavage to 5'-phosphomonoester.. Functionally, digests double-stranded RNA. Involved in the processing of primary rRNA transcript to yield the immediate precursors to the large and small rRNAs (23S and 16S). Processes some mRNAs, and tRNAs when they are encoded in the rRNA operon. Processes pre-crRNA and tracrRNA of type II CRISPR loci if present in the organism. This Borreliella afzelii (strain PKo) (Borrelia afzelii) protein is Ribonuclease 3.